We begin with the raw amino-acid sequence, 525 residues long: Tubulin-specific chaperone E (525 aa).

A CAP-Gly domain is found at 33-77 (GKVDGFEGNWYGIEWDDPKRGKHQGTVKGKQYFKCINKGSGSFMK). 3 LRR repeats span residues 300 to 321 (TLKS…LSSL), 326 to 347 (QLTE…GDVD), and 362 to 383 (NLKR…DKLD). Residues 414-444 (ENEIENDIENNNNNIKKDNNNNNKNNKNNKN) form a disordered region. Over residues 422-444 (ENNNNNIKKDNNNNNKNNKNNKN) the composition is skewed to low complexity. Residues 441-481 (NNKNNKTIFLNRLNIIPRLSNLKKLNLSDITLLERKDAELY) enclose the LRRCT domain.

Belongs to the TBCE family. In terms of assembly, supercomplex made of cofactors A to E. Cofactors A and D function by capturing and stabilizing tubulin in a quasi-native conformation. Cofactor E binds to the cofactor D-tubulin complex; interaction with cofactor C then causes the release of tubulin polypeptides that are committed to the native state.

Its subcellular location is the cytoplasm. It localises to the cytoskeleton. Tubulin-folding protein; involved in the second step of the tubulin folding pathway. This Dictyostelium discoideum (Social amoeba) protein is Tubulin-specific chaperone E (tbce).